A 259-amino-acid polypeptide reads, in one-letter code: Leucyl/phenylalanyl-tRNA--protein transferase (259 aa).

The protein belongs to the L/F-transferase family.

Its subcellular location is the cytoplasm. The catalysed reaction is N-terminal L-lysyl-[protein] + L-leucyl-tRNA(Leu) = N-terminal L-leucyl-L-lysyl-[protein] + tRNA(Leu) + H(+). The enzyme catalyses N-terminal L-arginyl-[protein] + L-leucyl-tRNA(Leu) = N-terminal L-leucyl-L-arginyl-[protein] + tRNA(Leu) + H(+). It carries out the reaction L-phenylalanyl-tRNA(Phe) + an N-terminal L-alpha-aminoacyl-[protein] = an N-terminal L-phenylalanyl-L-alpha-aminoacyl-[protein] + tRNA(Phe). Its function is as follows. Functions in the N-end rule pathway of protein degradation where it conjugates Leu, Phe and, less efficiently, Met from aminoacyl-tRNAs to the N-termini of proteins containing an N-terminal arginine or lysine. This chain is Leucyl/phenylalanyl-tRNA--protein transferase, found in Teredinibacter turnerae (strain ATCC 39867 / T7901).